The sequence spans 703 residues: Elongation factor G (703 aa).

The tr-type G domain maps to 9 to 292 (ERTRNIGIMA…AVVDYLPGPL (284 aa)). GTP is bound by residues 18–25 (AHIDAGKT), 91–95 (DTPGH), and 145–148 (NKMD).

It belongs to the TRAFAC class translation factor GTPase superfamily. Classic translation factor GTPase family. EF-G/EF-2 subfamily.

It localises to the cytoplasm. Catalyzes the GTP-dependent ribosomal translocation step during translation elongation. During this step, the ribosome changes from the pre-translocational (PRE) to the post-translocational (POST) state as the newly formed A-site-bound peptidyl-tRNA and P-site-bound deacylated tRNA move to the P and E sites, respectively. Catalyzes the coordinated movement of the two tRNA molecules, the mRNA and conformational changes in the ribosome. This chain is Elongation factor G, found in Leuconostoc mesenteroides subsp. mesenteroides (strain ATCC 8293 / DSM 20343 / BCRC 11652 / CCM 1803 / JCM 6124 / NCDO 523 / NBRC 100496 / NCIMB 8023 / NCTC 12954 / NRRL B-1118 / 37Y).